Reading from the N-terminus, the 144-residue chain is Cytochrome c-type biogenesis protein CcmE (144 aa).

At 1-7 the chain is on the cytoplasmic side; that stretch reads MTRKQKR. Residues 8–28 form a helical; Signal-anchor for type II membrane protein membrane-spanning segment; it reads LAVIGSGMGFLALAAALTFYA. Over 29 to 144 the chain is Periplasmic; that stretch reads LGQQTSYFYM…LKKDGLWQEQ (116 aa). Heme is bound by residues His122 and Tyr126.

It belongs to the CcmE/CycJ family.

It is found in the cell inner membrane. Its function is as follows. Heme chaperone required for the biogenesis of c-type cytochromes. Transiently binds heme delivered by CcmC and transfers the heme to apo-cytochromes in a process facilitated by CcmF and CcmH. This Chelativorans sp. (strain BNC1) protein is Cytochrome c-type biogenesis protein CcmE.